The primary structure comprises 184 residues: UPF0397 protein SA2477 (184 aa).

A run of 5 helical transmembrane segments spans residues 11 to 31 (VVAIGIGAAVFVILGRFVVIP), 44 to 64 (AFLALISAIFGPFAGLMTGLV), 77 to 97 (AWWSWVICSGIIGCLYGWIGL), 111 to 131 (MIYFNIGQIIANIICWALIAP), and 148 to 168 (QGVISAVLNIISVGIIGTILL).

It belongs to the UPF0397 family.

The protein resides in the cell membrane. This is UPF0397 protein SA2477 from Staphylococcus aureus (strain N315).